The sequence spans 928 residues: DNA mismatch repair protein MutS (928 aa).

Residue 613–620 (GPNMAGKS) coordinates ATP. The segment covering 854 to 872 (KAKSNKDDHRIDEKTENSS) has biased composition (basic and acidic residues). The segment at 854-880 (KAKSNKDDHRIDEKTENSSKKHKNKDS) is disordered.

It belongs to the DNA mismatch repair MutS family.

Functionally, this protein is involved in the repair of mismatches in DNA. It is possible that it carries out the mismatch recognition step. This protein has a weak ATPase activity. This chain is DNA mismatch repair protein MutS, found in Clostridium beijerinckii (strain ATCC 51743 / NCIMB 8052) (Clostridium acetobutylicum).